The primary structure comprises 797 residues: Probable exo-1,4-beta-xylosidase bxlB (797 aa).

Residues 1–21 form the signal peptide; that stretch reads MPLICIVYFLQYLDKIAISYA. 2 N-linked (GlcNAc...) asparagine glycosylation sites follow: Asn86 and Asn126. Asp312 is a catalytic residue. Residues Asn364, Asn431, Asn442, Asn483, Asn644, and Asn787 are each glycosylated (N-linked (GlcNAc...) asparagine).

The protein belongs to the glycosyl hydrolase 3 family.

Its subcellular location is the secreted. It catalyses the reaction Hydrolysis of (1-&gt;4)-beta-D-xylans, to remove successive D-xylose residues from the non-reducing termini.. Its pathway is glycan degradation; xylan degradation. Its function is as follows. Xylan 1,4-beta-xylosidase involved in the hydrolysis of xylan, a major structural heterogeneous polysaccharide found in plant biomass representing the second most abundant polysaccharide in the biosphere, after cellulose. The sequence is that of Probable exo-1,4-beta-xylosidase bxlB (bxlB) from Aspergillus oryzae (strain ATCC 42149 / RIB 40) (Yellow koji mold).